The chain runs to 222 residues: Ras-related protein Rab-21 (222 aa).

Position 2 is an N-acetylalanine (A2). Residues G25, G28, K29, T30, S31, N42, D43, H45, T47, and T48 each coordinate GTP. T30 contacts Mg(2+). The Switch 1 signature appears at 40–53 (KFNDKHITTLQASF). The Mg(2+) site is built by T48 and D71. A Switch 2 motif is present at residues 73–91 (AGQERFHALGPIYYRDSNG). Positions 74, 129, 130, 132, 160, and 161 each coordinate GTP. 2 S-geranylgeranyl cysteine lipidation sites follow: C218 and C219. C219 is modified (cysteine methyl ester). The propeptide at 220 to 222 (SSG) is removed in mature form.

Belongs to the small GTPase superfamily. Rab family. Interacts with the cytoplasmic tail of integrins ITGA1, ITGA2, ITGA5, ITGA6, ITGA11 and ITGB1; this interaction is dependent upon its GDP/GTP cycle. Interacts with RABGEF1 (via VPS9 domain). Interacts with ANKRD27. Interacts (in GTP-bound form) with VAMP8 in response to starvation; the interaction probably regulates VAMP8 endolysosomal trafficking. Interacts (active GTP-bound form) with TMED10; the interaction is indirect and regulates TMED10 abundance and localization at the Golgi. It depends on Mg(2+) as a cofactor.

It is found in the endoplasmic reticulum membrane. Its subcellular location is the golgi apparatus. It localises to the trans-Golgi network. The protein resides in the golgi apparatus membrane. The protein localises to the early endosome membrane. It is found in the cytoplasmic vesicle membrane. Its subcellular location is the cleavage furrow. It localises to the cell projection. The protein resides in the neuron projection. It carries out the reaction GTP + H2O = GDP + phosphate + H(+). Regulated by guanine nucleotide exchange factors (GEFs) including ANKRD27 and RABGEF1, which promote the exchange of bound GDP for free GTP. Regulated by GTPase activating proteins (GAPs) which increase the GTP hydrolysis activity. Inhibited by GDP dissociation inhibitors (GDIs). Functionally, the small GTPases Rab are key regulators of intracellular membrane trafficking, from the formation of transport vesicles to their fusion with membranes. Rabs cycle between an inactive GDP-bound form and an active GTP-bound form that is able to recruit to membranes different sets of downstream effectors directly responsible for vesicle formation, movement, tethering and fusion. RAB21 is involved in membrane trafficking control. Regulates integrin internalization and recycling, but does not influence the traffic of endosomally translocated receptors in general. As a result, may regulate cell adhesion and migration. During the mitosis of adherent cells, controls the endosomal trafficking of integrins which is required for the successful completion of cytokinesis. Involved in neurite growth. Following SBF2/MTMT13-mediated activation in response to starvation-induced autophagy, binds to and regulates SNARE protein VAMP8 endolysosomal transport required for SNARE-mediated autophagosome-lysosome fusion. Modulates protein levels of the cargo receptors TMED2 and TMED10, and required for appropriate Golgi localization of TMED10. The protein is Ras-related protein Rab-21 (RAB21) of Bos taurus (Bovine).